The sequence spans 199 residues: Pneumococcal vaccine antigen A homolog (199 aa).

Its subcellular location is the cell surface. This is Pneumococcal vaccine antigen A homolog (pvaA) from Streptococcus pyogenes serotype M18 (strain MGAS8232).